The sequence spans 132 residues: Fatty acid-binding protein, adipocyte (132 aa).

Position 2 is an N-acetylcysteine (C2). S13 is subject to Phosphoserine. A Phosphotyrosine; by Tyr-kinases modification is found at Y20. The Nuclear localization signal motif lies at 22–32; that stretch reads KEVGVGFATRK. Residue 127 to 129 participates in a fatty acid binding; that stretch reads RVY.

The protein belongs to the calycin superfamily. Fatty-acid binding protein (FABP) family. As to quaternary structure, monomer. Homodimer. Interacts with PPARG.

It localises to the cytoplasm. It is found in the nucleus. Lipid transport protein in adipocytes. Binds both long chain fatty acids and retinoic acid. Delivers long-chain fatty acids and retinoic acid to their cognate receptors in the nucleus. This Mus musculus (Mouse) protein is Fatty acid-binding protein, adipocyte (Fabp4).